Reading from the N-terminus, the 385-residue chain is Probable thioesterase PNKD (385 aa).

The tract at residues 32-58 (KASHNRTRALQSHSSPEGKEEPEPLSP) is disordered. Residues His-172, His-174, Asp-176, His-177, His-229, Asp-253, and His-291 each coordinate Zn(2+).

This sequence belongs to the metallo-beta-lactamase superfamily. Glyoxalase II family. In terms of assembly, isoform 2 interacts with the sarcomeric proteins, MRLC2, MYOM1 and ENO3. Zn(2+) serves as cofactor. Undergoes cleavage at the N-terminus. As to expression, isoform 1 is only expressed in the brain. Isoform 2 is ubiquitously detected with highest expression in skeletal muscle and detected in myocardial myofibrils.

It is found in the cell membrane. The protein resides in the mitochondrion. It localises to the cytoplasm. The protein localises to the golgi apparatus. Its subcellular location is the endoplasmic reticulum. It catalyses the reaction a thioester + H2O = a thiol + a carboxylate + H(+). Functionally, probable thioesterase that may play a role in cellular detoxification processes; it likely acts on a yet-unknown alpha-hydroxythioester substrate. In vitro, it is able to catalyze the hydrolysis of S-D-lactoyl-glutathione to form glutathione and D-lactic acid at very low rate, though this reaction is not physiologically relevant in vivo. This Homo sapiens (Human) protein is Probable thioesterase PNKD (PNKD).